A 262-amino-acid chain; its full sequence is LysM domain-containing protein ARB_03438 (262 aa).

The signal sequence occupies residues 1 to 22 (MVSIPLILGAIILLGTRKAATA). One can recognise a LysM 1 domain in the interval 31–75 (FAVTAATDDTCQSLGAQWGIGMAQFLKWNPGVNCNALVAGKTYCL). The disordered stretch occupies residues 85-112 (TASLTPSPQVPTTSRATQTMTSKASTGT). Residues 86 to 112 (ASLTPSPQVPTTSRATQTMTSKASTGT) are compositionally biased toward polar residues. Positions 132-179 (FYHPVSPGDTCQSIVDRYKAFTLDQFYTWNPSVGKNCESLWLGYYVCT) constitute a LysM 2 domain. A disordered region spans residues 184–240 (GPNSPSQQPPSQQPPSQQSPSQQSPSQQSPSQQPPSQQPPSQQPPSQQSNTSQQTQP). Low complexity predominate over residues 197–214 (PPSQQSPSQQSPSQQSPS). The span at 215–226 (QQPPSQQPPSQQ) shows a compositional bias: pro residues. Residues 227–240 (PPSQQSNTSQQTQP) show a composition bias toward low complexity. N-linked (GlcNAc...) asparagine glycosylation is present at asparagine 233.

The protein resides in the secreted. Its function is as follows. Might have a role in sequestration of chitin oligosaccharides (breakdown products of fungal cell walls that are released during invasion and act as triggers of host immunity) to dampen host defense. The chain is LysM domain-containing protein ARB_03438 from Arthroderma benhamiae (strain ATCC MYA-4681 / CBS 112371) (Trichophyton mentagrophytes).